Here is a 348-residue protein sequence, read N- to C-terminus: Holliday junction branch migration complex subunit RuvB (348 aa).

Positions 4–184 (ADRLIAASGR…FGIVQRLEFY (181 aa)) are large ATPase domain (RuvB-L). ATP is bound by residues isoleucine 23, arginine 24, glycine 65, lysine 68, threonine 69, threonine 70, 131-133 (EDF), arginine 174, tyrosine 184, and arginine 221. Threonine 69 is a Mg(2+) binding site. The tract at residues 185-255 (NDKDLSTIVS…VADMALNLLD (71 aa)) is small ATPAse domain (RuvB-S). Residues 258–348 (ERGFDHSDRR…GGDFSEPGDE (91 aa)) form a head domain (RuvB-H) region. DNA is bound by residues arginine 294, arginine 313, and arginine 318.

Belongs to the RuvB family. As to quaternary structure, homohexamer. Forms an RuvA(8)-RuvB(12)-Holliday junction (HJ) complex. HJ DNA is sandwiched between 2 RuvA tetramers; dsDNA enters through RuvA and exits via RuvB. An RuvB hexamer assembles on each DNA strand where it exits the tetramer. Each RuvB hexamer is contacted by two RuvA subunits (via domain III) on 2 adjacent RuvB subunits; this complex drives branch migration. In the full resolvosome a probable DNA-RuvA(4)-RuvB(12)-RuvC(2) complex forms which resolves the HJ.

Its subcellular location is the cytoplasm. It catalyses the reaction ATP + H2O = ADP + phosphate + H(+). Its function is as follows. The RuvA-RuvB-RuvC complex processes Holliday junction (HJ) DNA during genetic recombination and DNA repair, while the RuvA-RuvB complex plays an important role in the rescue of blocked DNA replication forks via replication fork reversal (RFR). RuvA specifically binds to HJ cruciform DNA, conferring on it an open structure. The RuvB hexamer acts as an ATP-dependent pump, pulling dsDNA into and through the RuvAB complex. RuvB forms 2 homohexamers on either side of HJ DNA bound by 1 or 2 RuvA tetramers; 4 subunits per hexamer contact DNA at a time. Coordinated motions by a converter formed by DNA-disengaged RuvB subunits stimulates ATP hydrolysis and nucleotide exchange. Immobilization of the converter enables RuvB to convert the ATP-contained energy into a lever motion, pulling 2 nucleotides of DNA out of the RuvA tetramer per ATP hydrolyzed, thus driving DNA branch migration. The RuvB motors rotate together with the DNA substrate, which together with the progressing nucleotide cycle form the mechanistic basis for DNA recombination by continuous HJ branch migration. Branch migration allows RuvC to scan DNA until it finds its consensus sequence, where it cleaves and resolves cruciform DNA. This is Holliday junction branch migration complex subunit RuvB from Pseudomonas putida (strain ATCC 47054 / DSM 6125 / CFBP 8728 / NCIMB 11950 / KT2440).